A 488-amino-acid polypeptide reads, in one-letter code: Rhamnulokinase (488 aa).

Residue alanine 13 to arginine 17 coordinates ATP. Cysteines 68 and 222 form a disulfide. Substrate contacts are provided by residues glycine 83 and histidine 236 to threonine 238. The active-site Proton acceptor is aspartate 237. Threonine 259 provides a ligand contact to ATP. Asparagine 296 contributes to the substrate binding site. Glutamine 304 provides a ligand contact to ATP. Cysteines 353 and 370 form a disulfide. Residue glycine 402 participates in ATP binding. Cysteine 413 and cysteine 417 form a disulfide bridge.

Belongs to the rhamnulokinase family. It depends on Mg(2+) as a cofactor.

The catalysed reaction is L-rhamnulose + ATP = L-rhamnulose 1-phosphate + ADP + H(+). It functions in the pathway carbohydrate degradation; L-rhamnose degradation; glycerone phosphate from L-rhamnose: step 2/3. In terms of biological role, involved in the catabolism of L-rhamnose (6-deoxy-L-mannose). Catalyzes the transfer of the gamma-phosphate group from ATP to the 1-hydroxyl group of L-rhamnulose to yield L-rhamnulose 1-phosphate. This is Rhamnulokinase from Klebsiella pneumoniae (strain 342).